An 8799-amino-acid polypeptide reads, in one-letter code: MATSRASSRSHRDITNVMQRLQDEQEIVQKRTFTKWINSHLAKRKPPMVVDDLFEDMKDGIKLLALLEVLSGQKLPCEQGHRVKRIHAVANIGTALKFLEGRKIKLVNINATDIADGRPSIVLGLMWTIILYFQIEELTSNLPQLQSLSSSASSVDSMVSTETASPPSKRKVAAKIQGNAKKTLLKWVQHTAGKQMGIEVKDFGKSWRTGLAFHSVIHAIQPELVDLEKVKTRSNRENLEDAFTIAETQLGIPRLLDPEDVDVDKPDEKSIMTYVAQFLTQYPDIHGAGCDGQEDDVVFVGFTNNIALLLGFQRDDRLILKETKVWIEQFERDFTRAQMTESSLQDKYQAFKHFRVQYEMKRKQVEHIIQPLQRDGKLTLDQALVKQCWERVSSRLFDWHIQLDKSLPAPLGTIGAWLYRAEVALREEITIQQVHEETANTIQRKLEQHKDLLQNTDAHKRAFHEIYQTRSVNGIPMPPDQLEDMAERFHFVSSTSELHLMKMEFLELKYRLLSLLVLAESKLKSWIIKYGRRESVELLLQSYISFIENSKFFEQYEVTYQILKQTADIYVKAEGSVEEAENVMKFMSEATAQWRNLSVEVRSVRSMLEEVISNWDRYGDTVASLQAWLEDAEKMLSQSEHAKKDFFRNLPHWIQQHTAMNDAGNFLIETCDEIVSRDLKQQLLLLNGRWRELFMEVKQYARADEMDRMKKEYIDVTTTLFGFATEAHRKLSEPLEVSFINVKLLIQDLEDLEKRVPVMDAQYKMIAKKAHLFAKESPQEEANEMLTTMSKLKEQLSKVKECCSPLLYEAQQLTVPLEELETQITSFYDSLGKINEILSVLEQEAQSSTLFKQKHQELLASQENCKKSLTLIEKGSQSVQKLVTSSQARKPWDHTKLQKQIADVHHAFQSMIKKTGDWKKHVEANSRLMKKFEESRAELEKVLRVAQEGLEEKGDPEELLRRHTEFFSQLDQRVLNAFLKACDELTDILPEQEQQGLQEAVRKLHKQWKDLQGEAPYHLLHLKIAVEKDRFSAAVEECRAELEQETKLAPQEGSEKIIKEHRVFFSDKGPHHLCEKRLQLIEELCGKLPVQDPVRDTCGACHTALKELKASIDNTYTMLVDDPDKWKDYTSRFSEFSSWVSAKKACLKKIKDEPIDTGNHDEVKHMVDEIRNDITKKGESLSWLKSRLKYLIDISSENEAQKRGDELAELSSSFKALVALLSEVEKLLSNFGECVQYKEIVKSSLEGLISGPQESKEEAEMILDSKNLLEAQQLLLHHQQKTKMISAKKRDLQEQMEQAQQGGQAGPGQEELRKLESTLTGLEQSRERQERRIQVSLRKWERFETNKETVVRYLFQTGSSHERFLSFSSLESLSSELEQTKEFSKRTESIATQAENLVKEAAELPLGPRNKRVLQRQAKSIKEQVTTLEDTLEEDIKTMEMVKSKWDHFGSNFETLSIWILEKENELSSLEASASAADVQISQIKVTIQEIESKIDSIVGLEEEAQSFAQFVTTGESARIKAKLTQIRRYWEELQEHARGLEGTILGHLSQQQKFEENLRKIRQSVSEFAERLADPIKICSSAAETYKVLQEHMDLCQAVESLSSTVTMFSASAQKAVNRESCTQEAAALQQQYEEILHKAKEMQTALEDLLARWQRLEKGLSPFLTWLERCEAIASSPEKDISADRGKVESELQLIQALQNEVVSQASLYSNLLQLKEALFSVASKEDVAVMKLQLEQLDERWGDLPQIISKRMHFLQSVLAEHKQFDELLFSFSVWIKQFLGELQRTSEINLRDHQVALTRHKDHAAEIEKKRGEITHLQGHLSQLRSLGRAQDLHPLQSKVDDCFQLFEEASQVVERRKLALAQLAEFLQSHACMSTLLYQLRQTVEATKSMSKKQSDSLKTDLHSAIQDVKTLESSAISLDGTLTKAQCHLKSASPEERTSCRATTDQLSLEVERIQNLLGTKQSEADALVALKEAFREQKEELLRSIEDIEERMDRERLKVPTRQALQHRLRVFNQLEDELNSHEHELCWLKDKAKQIAQKDVAFAPEVDREINGLEATWDDTRRQIHENQGQCCGLIDLVREYQSLKSTVCNVLEDASNVVVMRATIKDQGDLKWAFSKHETSRNEMNSKQKELDSFTSKGKHLLSELKKIHSGDFSLVKTDMESTLDKWLDVSERIEENMDMLRVSLSIWDDVLSRKDEIEGWSNSSLPKLAENISNLNNSLRAEELLKELESEVKIKALKLEDLHSKINNLKELTKNPETPTELQFIEADLRQKLEHAKEITEEARGTLKDFTAQRTQVERFVKDITAWLINVEESLTRCAQTETCEGLKKAKDIRKELQSQQNSITSTQEELNSLCRKHHSVELESLGRAMTGLIKKHEATSQLCSQTQARIQDSLEKHFSGSMKEFQEWFLGAKAAARESSNLTGDSQILEARLHNLQGVLDSLSDGQSKLDVVTQEGQTLYAHLPKQIVSSIQEQITKANEEFQAFLKQCLKEKQALQDCVSELGSFEDQHRKLNLWIHEMEERLKTENLGESKHHISEKKNEVRKVEMFLGELLAARESLDKLSQRGQLLSEESHSAGKGGCRSTQLLTSYQSLLRVTKEKLRSCQLALKEHEALEEATQSMWARVKDVQDRLACAESTLGNKETLEGRLSQIQDILLMKGEGEVKLNLAIGKGDQALRSSNKEGQQAIQDQLEMLKKAWAEAMNSAVHAQSTLESVIDQWNDYLEKKSQLEQWMESVDQRLEHPLQLQPGLKEKFSLLDHFQSIVSEAEDHTGALQQLAAKSRELYQKTQDESFKEAGQEELRTQFQDIMTVAKEKMRTVEDLVKDHLMYLDAVQEFADWLHSAKEELHRWSDTSGDPSATQKKLLKIKELIDSREIGAGRLSRVESLAPAVKQNTAASGCELLNSEMQALRADWRQWEDCLFQTQSSLESLVSEMALSEQEFFGQVTQLEQALEQFCTLLKTWAQQLTLLEGKNSDEEILECWHKGREILDALQKAEPMTEDLKSQLNELCRFSRDLSPYSEKVSGLIKEYNCLCLQASKGCQNKEQILQERFQKASRGFQQWLVNAKITTAKCFDLPQNLSEVSSSLQKIQEFLSESENGQHKLNTMLFKGELLSSLLTEEKAQAVQAKVLTAKEEWKSFHANLHQKESALENLKIQMKDFEVSAELVQNWLSKTERLVQESSNRLYDLPAKRREQQKLQSVLEEIQCYEPQLHRLKEKARQLWEGQAASKSFVHRVSQLSSQYLALSNVTKEKVSRLDRIIAEHNRFSQGVKELQDWMSDAVHMLDSYCLPTSDKSVLDSRMLKLEALLSVRQEKEIQMKMVVTRGEYVLQSTSLEGSAAVQQQLQAVKDMWESLLSAAIRCKSQLEGALSKWTSYQDDVRQFSSWMDSVEVSLTESEKQHTELREKITALGKAKLLNEEVLSHSSLLETIEVKRAAMTEHYVTQLELQDLQERHQALKEKAKEAVTKLEKLVRLHQEYQRDLKAFESWLEQEQEKLDRCSVHEGDTNAHETMLRDLQELQVRCAEGQALLNSVLHTREDVIPSGLPQAEDRVLESLRQDWQVYQHRLAEARMQLNNVVNKLRLMEQKFQQADEWLKRMEEKINFRSECQSSRSDKEIQLLQLKKWHEDLSAHRDEVEEVGTRAQGILDETHISSRMGCQATQLTSRYQALLLQVLEQIKFFEEELQCLEETESSLSSYSDWYGSTHKNFKNVATKIDKVDESMMGKKLKTLEVLLKDMEKGHSLLKSAREKGERAMKFLAEHEAEALRKEIHTYMEQLKNLTSTVRKECMSLEKGLHLAKEFSDKYKVLAQWMAEYQEILCTPEEPKMELYEKKAQLSKYKSLQQMVLSHEPSVTSVQEKSEALLELVQDQSLKDKIQKLQSDFQDLCSRAKERVFSLEAKVKDHEDYNTELQEVEKWLLQMSGRLVAPDLLEMSSLETITQQLAHHKAMMEEIAGFEDRLDNLKAKGDTLIGQCPEHLQAKQKQTVQAHLQGTKDSYSAICSTAQRVYRSLEYELQKHVSSQDTLQQCQAWISAVQPDLKPSPQPPLSRAEAVKQVKHFRALQEQARTYLDLLCSMCDLSNSSVKNTAKDIQQTEQLIEQRLVQAQNLTQGWEEIKSLKAELWIYLQDADQQLQNMKRRHTELEINIAQNMVMQVKDFIKQLQCKQVSVSTIVEKVDKLTKNQESPEHKEITHLNDQWQDLCLQSDKLCAQREQDLQRTSSYHDHMRVVEAFLEKFTTEWDSLARSNAESTAIHLEALKKLALALQEEMYAIDDLKDCKQKLIEQLGLDDRELVREQTSHLEQRWFQLQDLVKRKIQVSVTNLEELNVIQSRFQELMEWAEEQQPNIVEALKQSPPPGMAQHLLMDHLAICSELEAKQVLLKSLMKDADRVMADLGLNERKVIQKALSEAQKHVSCLSDLVGQRRKYLNKALSEKTQFLMAVFQATSQIQQHERKIVFREYICLLPDDVSKQVKTCKTAQASLKTYQNEVTGLCAQGRELMKGITKQEQEEVLGKLQELQTVYDTVLQKCSHRLQELEKSLVSRKHFKEDFDKACHWLKQADIVTFPEINLMNEKTELHAQLDKYQSILEQSPEYENLLLTLQTTGQAMLPSLNEVDHSYLSEKLSALPQQFNVIVALAKDKFYKTQEAILARKEYTSLIELTTQSLGDLEDQFLKMRKMPSDLIVEESVSLQQSCSALLGEVVALGEAVNELNQKKESFRSTGQPWQPEKMLQLATLYHRLKRQAEQRVSFLEDTTSVYKEHAQMCRQLESQLEVVKREQAKVNEETLPAEEKLKVYHSLAGSLQDSGILLKRVATHLEDLSPHLDPTAYEKAKSQVQSWQEELKQMTSDVGELVTECESRMVQSIDFQTEMSRSLDWLRRVKAELSGPVCLDLSLQDIQEEIRKIQIHQEEVLSSLRIMSALSHKEQEKFTKAKELISADLEHTLAELQELDGDVQEALRTRQATLTEIYSRCQRYYQVFQAANDWLDDAQEMLQLAGNGLDVESAEENLRSHMEFFKTEGQFHSNMEELRGLVARLDPLIKATGKEELAQKMASLEKRSQGIIQESHTQRDLLQRCMVQWQEYQKAREGVIELMNDAEKKLSEFAVLKTSSIHEAEEKLSKHKALVSVVDSFHEKIVALEEKASQLEQTGNDTSKATLSRSMTTVWQRWTRLRAVAQDQEKILEDAVDEWKRLSAKVKETTEVINQLQGRLPGSSTEKASKAELMTLLESHDTYLMDLESQQLTLGVLQQRALSMLQDRAFPGTEEEVPILRAITALQDQCLNMQEKVKNHGKLVKQELQEREAVETRINSVKSWVQETKDYLGNPTIEIDTQLEELKRLLAEATSHQESIEKIAEEQKNKYLGLYTVLPSEISLQLAEVALDLKIHDQIQEKVQEIEEGKAMSQEFSCKIQKVTKDLTTILTKLKAKTDDLVHAKAEHKMLGEELDGCNSKLMELDAAIQTFSERHSQLGQPLAKKIGKLTELHQQTIRQAENRLSKLNQALSHMEEYNEMLETVRKWIEKAKVLVHGNIAWNSASQLQEQYILHQTLLEESGEIDSDLEAMAEKVQHLANVYCTGKLSQQVTQFGREMEELRQAIRVRLRNLQDAAKDMKKFEGELRNLQVALEQAQTILTSPEVGRRSLKEQLCHRQHLLSEMESLKPKMQAVQLCQSALRIPEDVVASLPLCHAALRLQEEASQLQHTAIQQCNIMQAKKHSLIFPPKEAVVQYEQYKQEMKHLQQLIEEAHREIEDKPVATSNIQELQAQISLHEELAQKIKGYQEQIDSLNSKCKMLTMKAKHATMLLTVTEVEGLAEGTEDLDRELHPTPSAHPSVVMMTAGRCHTLLSPVTEESGEEGTNSEISSPPACRSPSPVANTEAAVNQDIAYYQALSAEGLQTDAARIPPSAAVSQELYEPGLEPSATAKLGDLQRSWETLKNVISEKQRTLYEVLERQQKYQDSLQSISTKMEAMEMKLGESLEPSRSPESQMAEHQALMDEVQMLQDEINGLQVSLAEELVAESQESDPAEQLALQSTLTVLAERMSTIRMKAAGKRQLLEEKLSDQLEEQRQEQALQRYRCEADELDHWLLNTKATLDVALGTSQEPMDMDAQLVDCQNMLVEIEQKVVALSQLSVHNENLLLEGKAHTKEEAEQLAVKLRLLKGSLGELQRALHDRQLDMQGVTQEKEENDVDFTDTQSPGVQEWLAQARTTRTHQRQSSLQQQKEFEQELAEQKSLLRSVASRGEEILTQHSTAEGSGGLGEKPDVLSQELGIAEDQMRVKWESLHQEFSAKQKLLQNILEQEQEQVLYSSPNRLLSGVLPFRGEAQTQDKTSVTSLLDGLSQAFGEASSQSGGTDRQSIHLEQKLYDGVSATSTWLNDVEERLFVATAPLPEETEACLFNQEALAKDIKEMSEEMDKNKNLFSQAFPEDSDNRDVIEDTLGCLLGRLSLLDSVVDQRCHQMKERLQQILRFQNDLKVLFTSLADSKYIILQKLANVFEQPIVEQMQAIQQAEEGLRDLEGGISELKRWADKLQVEQSAVQELSKLQDMYDELLMTVSSRRSSLHQNLALKSQYDKALQDLVDLLDTGQEKMTGDQKIIVCSKEEIQQLLGKHKEYFQGLESHMILTEILFRKIVGFAAVKETQFHTDCMAQASAVLKQAHKRGVELEYILEMWSHLDENRQELSRQLEVIENSIPSVGLVEESEDRLVERTNLYQHLKSSLNEYQPKLYQALDDGKRLLMSVSCSELESQLNQLGEHWLSNTNKVSKELHRLETILKHWTRYQSEAAALNHWLQCAKDRLAFWTQQSVTVPQELEMVRDHLSAFLEFSKEVDAKSALKSSVTSTGNQLLRLKKVDTAALRAELSRMDSQWTDLLTGIPVVQEKLHQLQMDKLPSRHAISEVMSWISLMESVILKDEEDIRNAIGYKAIHEYLQKYKGFKIDLNCKQLTADFVNQSVLQISSQDVESKRSDKTDFAEQLGAMNKSWQLLQGRVGEKIQMLEGLLESWSEYENSVQSLKAWFANQERKLKEQHLLGDRNSVENALKDCQELEDLIKAKEKEVEKIEQNGLALIQNKREEVSGSVMSTLQELRQTWISLDRTVEQLKIQLTSALGQWSNHKAACDEINGHLMEARYSLSRFRLLTGSSEAVQVQVDNLQNLHDELEKQEGGLQKFGSITNQLLKECHPPVAETLSSTLQEVNMRWNNLLEEIAEQLHSSKALLQLWQRYKDYSKQCASAIQRQEEQTSVLLKAATNKDIADDEVTKWIQDCNDLLKGLETVKDSLFILRELGEQLGQQVDVSAAAAIQCEQLCFSQRLGALEQALCKQQAVLQAGVVDYETFAKSLEALEVWMVEAEGILQGQDPTHSSDLSTIQERMEELKGQMLKFSSLAPDLDRLNELGYRLPLNDKEIKRMQNLNRHWSLTSSQTTERFSKLQSFLLQHQTFLEKCETWMEFLVQTEHKLAVEISGNYQHLLEQQRAHELFQAEMFSRQQILHSIIVDGQNLLEQGQVDDREEFSLKLTLLSNQWQGVIRRAQQRRGIIDSQIRQWQRYREMAEKLRKWLAEVSHLPLSGLGNIPVPLQQVRMLFDEVQFKEKVFLRQQGSYILTVEAGKQLLLSADSGAEAALQAELTDIQEKWKAASMHLEEQKKKLAFLLKDWEKCERGIANSLEKLRMFKKRLSQPLPDHHEELHAEQMRCKELENAVGRWTDDLTELMLVRDALAVYLSAEDISMLKERVELLQRQWEELCHQVSLRRQQVSERLNEWAVFSEKNKELCEWLTQMESKVSQNGDILIEEMIEKLKKDYQEEIAVAQENKIQLQEMGERLAKASHESKASEIQYKLSRVKDRWQHLLDLMAARVKKLKETLVAVQQLDKNMGSLRTWLAHMESELAKPIVYDSCNSEEIQRKLNEQQELQRDIEKHSTGVASVLNLCEVLLHDCDACATDAECDSIQQATRNLDRRWRNICAMSMERRLKIEETWRLWQKFLDDYSRFEDWLEVSERTAAFPSSSGVLYTVAKEELKKFEAFQRQVHESLTQLELINKQYRRLARENRTDSACSLRQMVHGGNQRWDDLQKRVTSILRRLKHFISQREEFETARDSILVWLTEMDLQLTNIEHFSECDVQAKIKQLKAFQQEISLNHNKIEQIIAQGEQLIEKSEPLDAAVIEEELDELRRYCQEVFGRVERYHKKLIRLPVRLPDDHDLSDRELDLEDSTALSDLRWQDPSADGMPSPQPSSNPSLSLPQPLRSERSGRDTPASVDSIPLEWDHDYDLSRDLESASRTLPSEDEEGEEDKEFYLRGAVGLSGDPSSLESQMRQLDKALDDSRFQIQQTANILRSKTPTGPDLDTSYKGYMKLLGECSGSIDSVRRLEHKLAEEESFPGFVNLNSTETQTAGVIDRWELLQAQAMSKELRMKQNLQKWQQFNSDLNNIWAWLGETEEELDRLQHLALSTDIHTIESHIKKLKELQKAVDHRKAIILSINLCSSEFTQADSKESHDLQDRLSQMNGRWDRVCSLLEDWRGLLQDALMQCQEFHEMSHALLLMLENIDRRKNEIVPIDSTLDPETLQDHHKQLMQIKQELLKSQLRVASLQDMSRQLLVNAEGSDCLEAKEKVHVIGNRLKLLLKEVSHHIKDLEKLLDMSSSQQDLSSWSSADELDTSGSVSPTSGRSTPNRQKSPRGKCSLSQPGPSVSSPKSRSTRDGSDSSRSDPRPERVGRAFLFRILRAALPFQLLLLLLIGLTCLVPMSEKDYSCALSNNFARSFHPMLRYTNGPPPL.

Residues 1-289 (MATSRASSRS…TQYPDIHGAG (289 aa)) form an actin-binding region. Topologically, residues 1-8748 (MATSRASSRS…GRAFLFRILR (8748 aa)) are cytoplasmic. Calponin-homology (CH) domains follow at residues 27-134 (IVQK…LYFQ) and 178-283 (GNAK…TQYP). Spectrin repeat units lie at residues 314-397 (RDDR…SRLF), 398-502 (DWHI…HLMK), 503-609 (MEFL…SMLE), 610-703 (EVIS…YARA), 704-815 (DEMD…QLTV), 816-923 (PLEE…KHVE), 924-1024 (ANSR…HLKI), 1025-1122 (AVEK…LVDD), 1123-1246 (PDKW…SSLE), 1247-1333 (GLIS…ERRI), 1334-1442 (QVSL…MEMV), 1443-1548 (KSKW…ILGH), 1549-1651 (LSQQ…LEDL), 1652-1761 (LARW…LQSV), 1762-1877 (LAEH…SHAC), 1878-1974 (MSTL…ADAL), 1975-2079 (VALK…QGQC), 2080-2193 (CGLI…LRVS), 2194-2301 (LSIW…KDFT), 2302-2399 (AQRT…QTQA), 2400-2511 (RIQD…LQDC), 2512-2617 (VSEL…LRSC), 2618-2729 (QLAL…LESV), 2730-2836 (IDQW…VEDL), 2837-2960 (VKDH…FGQV), 2961-3060 (TQLE…QNKE), 3061-3169 (QILQ…LENL), 3170-3273 (KIQM…VSRL), 3274-3385 (DRII…LEGA), 3386-3488 (LSKW…LEKL), 3489-3591 (VRLH…RMQL), 3592-3718 (NNVV…YSDW), 3719-3812 (YGST…LEKG), 3813-3918 (LHLA…LEAK), 3919-4026 (VKDH…QRVY), 4027-4137 (RSLE…KSLK), 4138-4233 (AELW…REQD), 4234-4337 (LQRT…IQVS), 4338-4449 (VTNL…LNKA), 4450-4558 (LSEK…LEKS), 4559-4667 (LVSR…TQEA), 4668-4774 (ILAR…LEDT), 4775-4880 (TSVY…CESR), 4881-4989 (MVQS…LTEI), 4990-5097 (YSRC…LQRC), 5098-5207 (MVQW…LEDA), 5208-5316 (VDEW…GKLV), 5317-5422 (KQEL…EEGK), 5423-5520 (AMSQ…LSKL), 5521-5628 (NQAL…LQDA), 5629-5745 (AKDM…PKEA), and 5746-5851 (VVQY…PSAH). A coiled-coil region spans residues 314 to 8666 (RDDRLILKET…DLEKLLDMSS (8353 aa)). The residue at position 377 (Lys-377) is a Phosphoserine. Ser-732 is subject to Phosphoserine. A disordered region spans residues 1288 to 1310 (KKRDLQEQMEQAQQGGQAGPGQE). At Thr-2268 the chain carries Phosphothreonine. Residue Ser-5655 is modified to Phosphoserine. The tract at residues 5868 to 5894 (PVTEESGEEGTNSEISSPPACRSPSPV) is disordered. Spectrin repeat units lie at residues 5971–6080 (LERQ…LEEK), 6081–6187 (LSDQ…SLGE), 6377–6488 (RQSI…RLQQ), 6489–6584 (ILRF…RSSL), 6585–6694 (HQNL…LEMW), 6695–6798 (SHLD…TILK), 6799–6905 (HWTR…QEKL), 6906–7023 (HQLQ…LEGL), 7024–7131 (LESW…LTSA), 7132–7240 (LGQW…SKAL), 7241–7353 (LQLW…LQAG), 7354–7457 (VVDY…LQSF), 7458–7561 (LLQH…RGII), 7562–7674 (DSQI…LAFL), 7675–7786 (LKDW…NEWA), 7787–7886 (VFSE…LKET), 7887–8000 (LVAV…IEET), 8001–8109 (WRLW…LKHF), and 8110–8221 (ISQR…VRLP). 2 positions are modified to phosphoserine: Asp-8225 and Ser-8227. A disordered region spans residues 8237–8287 (TALSDLRWQDPSADGMPSPQPSSNPSLSLPQPLRSERSGRDTPASVDSIPL). Residues 8257–8269 (PSSNPSLSLPQPL) are compositionally biased toward low complexity. Residue Thr-8278 is modified to Phosphothreonine. 3 positions are modified to phosphoserine: Ser-8281, Ser-8284, and Ser-8308. Spectrin repeat units follow at residues 8332–8440 (SSLE…MKQN), 8441–8550 (LQKW…LQDA), and 8551–8668 (LMQC…SSSQ). Position 8363 is a phosphothreonine (Thr-8363). Residues 8673-8735 (SWSSADELDT…SDSSRSDPRP (63 aa)) are disordered. 2 stretches are compositionally biased toward polar residues: residues 8682 to 8698 (TSGSVSPTSGRSTPNRQ) and 8706 to 8718 (SLSQPGPSVSSPK). Basic and acidic residues predominate over residues 8721 to 8735 (STRDGSDSSRSDPRP). Residues 8740–8799 (RAFLFRILRAALPFQLLLLLLIGLTCLVPMSEKDYSCALSNNFARSFHPMLRYTNGPPPL) form the KASH domain. A helical; Anchor for type IV membrane protein membrane pass occupies residues 8749–8769 (AALPFQLLLLLLIGLTCLVPM). The Perinuclear space portion of the chain corresponds to 8770–8799 (SEKDYSCALSNNFARSFHPMLRYTNGPPPL).

Belongs to the nesprin family. In terms of assembly, core component of LINC complexes which are composed of inner nuclear membrane SUN domain-containing proteins coupled to outer nuclear membrane KASH domain-containing nesprins. SUN and KASH domain-containing proteins seem to bind each other promiscuously; however, differentially expression of LINC complex constituents can give rise to specific assemblies. At least SUN1/2-containing core LINC complexes are proposed to be hexameric composed of three protomers of each KASH and SUN domain-containing protein. The SUN2:SYNE1/KASH1 LINC complex is a heterohexamer; the homotrimeric cloverleave-like conformation of the SUN domain is a prerequisite for LINC complex formation in which three separate SYNE1/KASH1 peptides bind at the interface of adjacent SUN domains. Self-associates. Interacts with SYNE3. Interacts with SUN3; proposed to form a spermatogenesis-specific LINC complex with SUN3 during sperm head formation. May interact with MUSK. Interacts with SPAG4/SUN4. Interacts with EMD and LMNA in vitro. Interacts with F-actin via its N-terminal domain. Interacts with DCTN1 and DYNC1I1/2; suggesting the association with the dynein-dynactin motor complex. Interacts (via KASH domain) with TMEM258. In terms of processing, the disulfid bond with SUN1 or SUN2 is required for stability of the respective LINC complex under tensile forces. Expressed in C2F3 and CH310T1/2 cells, brain and skeletal muscle (at protein level).

Its subcellular location is the nucleus outer membrane. The protein localises to the nucleus. It is found in the nucleus envelope. It localises to the cytoplasm. The protein resides in the cytoskeleton. Its subcellular location is the myofibril. The protein localises to the sarcomere. In terms of biological role, multi-isomeric modular protein which forms a linking network between organelles and the actin cytoskeleton to maintain the subcellular spatial organization. As a component of the LINC (LInker of Nucleoskeleton and Cytoskeleton) complex involved in the connection between the nuclear lamina and the cytoskeleton. The nucleocytoplasmic interactions established by the LINC complex play an important role in the transmission of mechanical forces across the nuclear envelope and in nuclear movement and positioning. May be involved in nucleus-centrosome attachment. During interkinetic nuclear migration (INM) at G2 phase and nuclear migration in neural progenitors its LINC complex association with SUN1/2 and probably association with cytoplasmic dynein-dynactin motor complexes functions to pull the nucleus toward the centrosome; SYNE1 and SYNE2 seem to act redundantly in cerebellum, midbrain, brain stem, and other brain regions except cerebral cortex and hippocampus. Required for centrosome migration to the apical cell surface during early ciliogenesis. May be involved in nuclear remodeling during sperm head formation in spermatogenesis; a probable SUN3:SYNE1/KASH1 LINC complex may tether spermatid nuclei to posterior cytoskeletal structures such as the manchette. The sequence is that of Nesprin-1 from Mus musculus (Mouse).